The chain runs to 397 residues: Growth-regulating factor 1 (397 aa).

The QLQ domain occupies 18 to 53; it reads PFTASQWQELEHQALIYKYMASGTPIPSDLILPLRR. 2 short sequence motifs (bipartite nuclear localization signal) span residues 86-105 and 123-130; these read RKAE…KKWR and RGKNRSRK. A WRC domain is found at 90-134; sequence DPEPGRCRRTDGKKWRCSKEAYPDSKYCEKHMHRGKNRSRKPVEM. Residues 117 to 176 are disordered; that stretch reads CEKHMHRGKNRSRKPVEMSLATPPPPSSSATSAASNTSAGVAPTTTTTSSPAPSYSRPAP. Positions 120–129 are enriched in basic residues; it reads HMHRGKNRSR. A compositionally biased stretch (low complexity) spans 144-174; that stretch reads SSATSAASNTSAGVAPTTTTTSSPAPSYSRP.

The protein belongs to the GRF family.

The protein resides in the nucleus. Transcription activator that plays a regulatory role in gibberellin-induced stem elongation. This Oryza sativa subsp. japonica (Rice) protein is Growth-regulating factor 1 (GRF1).